We begin with the raw amino-acid sequence, 152 residues long: Dynein light chain Tctex-type protein 2B (152 aa).

It belongs to the dynein light chain Tctex-type family. In terms of assembly, light chain of the cytoplasmic dynein complex 2, a multisubunit complex composed at least of eleven different proteins. The cytoplasmic dynein 2 complex consists of two catalytic heavy chains (HCs) and a number of non-catalytic subunits presented by intermediate chains (ICs), light intermediate chains (LICs) and light chains (LCs). Among them, a heavy chain (DYNC2H1), two intermediate chains (DYNC2I2 and DYNC2I1), a light intermediate chain (DYNC2LI1), and a light chain (DYNLT2B) are unique to the dynein-2 complex, but a subset of the light chains are also shared by dynein-1 and dynein-2 complexes. The dimer DYNLT2B-DYNLT1/DYNLT3 interacts with DYNC2I1; this interaction is crucial for retrograde trafficking of ciliary proteins.

Its subcellular location is the dynein axonemal particle. Its function is as follows. Acts as one of several non-catalytic accessory components of the cytoplasmic dynein 2 complex (dynein-2 complex), a motor protein complex that drives the movement of cargos along microtubules within cilia and flagella in concert with the intraflagellar transport (IFT) system. Required for proper retrograde ciliary transport. This is Dynein light chain Tctex-type protein 2B (DYNLT2B) from Bos taurus (Bovine).